A 493-amino-acid polypeptide reads, in one-letter code: ATP synthase subunit beta 3 (493 aa).

A disordered region spans residues V113–A138. G170–T177 lines the ATP pocket.

This sequence belongs to the ATPase alpha/beta chains family. In terms of assembly, F-type ATPases have 2 components, CF(1) - the catalytic core - and CF(0) - the membrane proton channel. CF(1) has five subunits: alpha(3), beta(3), gamma(1), delta(1), epsilon(1). CF(0) has three main subunits: a(1), b(2) and c(9-12). The alpha and beta chains form an alternating ring which encloses part of the gamma chain. CF(1) is attached to CF(0) by a central stalk formed by the gamma and epsilon chains, while a peripheral stalk is formed by the delta and b chains.

Its subcellular location is the cell inner membrane. The catalysed reaction is ATP + H2O + 4 H(+)(in) = ADP + phosphate + 5 H(+)(out). Produces ATP from ADP in the presence of a proton gradient across the membrane. The catalytic sites are hosted primarily by the beta subunits. This is ATP synthase subunit beta 3 from Paraburkholderia xenovorans (strain LB400).